The sequence spans 551 residues: PA-phosphatase related-family protein DDB_G0268928 (551 aa).

Composition is skewed to polar residues over residues 26-47 (TESL…SGKD) and 137-152 (KYNT…SSNK). 2 disordered regions span residues 26–50 (TESL…DYSS) and 123–172 (KGED…NNNN). Residues 153–171 (TQTTVLNNSTTSSNNINNN) show a composition bias toward low complexity. Transmembrane regions (helical) follow at residues 211-231 (SYSD…SIIY), 232-252 (SLLV…LVFI), 273-293 (LAVG…AVVL), 346-366 (ILQL…IYIL), 393-413 (MFIC…LIFP), 474-494 (ILPA…IATM), and 500-520 (YFVD…YGGF).

The protein belongs to the PA-phosphatase related phosphoesterase family.

Its subcellular location is the membrane. This Dictyostelium discoideum (Social amoeba) protein is PA-phosphatase related-family protein DDB_G0268928.